Consider the following 161-residue polypeptide: Phosphopantetheine adenylyltransferase (161 aa).

Residue Thr10 coordinates substrate. ATP is bound by residues 10-11 and His18; that span reads TF. 3 residues coordinate substrate: Lys42, Leu74, and Arg88. Residues 89–91, Glu99, and 124–130 each bind ATP; these read GIR and WRYLSST.

The protein belongs to the bacterial CoaD family. Homohexamer. Requires Mg(2+) as cofactor.

The protein resides in the cytoplasm. The enzyme catalyses (R)-4'-phosphopantetheine + ATP + H(+) = 3'-dephospho-CoA + diphosphate. It participates in cofactor biosynthesis; coenzyme A biosynthesis; CoA from (R)-pantothenate: step 4/5. Functionally, reversibly transfers an adenylyl group from ATP to 4'-phosphopantetheine, yielding dephospho-CoA (dPCoA) and pyrophosphate. The sequence is that of Phosphopantetheine adenylyltransferase from Haemophilus ducreyi (strain 35000HP / ATCC 700724).